A 60-amino-acid polypeptide reads, in one-letter code: Metallothionein (60 aa).

The interval 1-28 (MDCACATGGSCSCAGSCKCENCKCTSCK) is beta. A divalent metal cation contacts are provided by Cys3, Cys5, Cys11, Cys13, Cys17, Cys19, Cys22, Cys24, Cys27, Cys31, Cys32, Cys34, Cys35, Cys39, Cys42, Cys46, Cys48, Cys56, Cys58, and Cys59. The alpha stretch occupies residues 29-60 (KSCCSCCPSECEKCGQGCVCKGGSSEKCSCCN).

Belongs to the metallothionein superfamily. Type 1 family.

Metallothioneins have a high content of cysteine residues that bind various heavy metals. This Ambystoma mexicanum (Axolotl) protein is Metallothionein (MT-A).